Reading from the N-terminus, the 425-residue chain is MTPTPTLIQRFLNGSLVLQIVIGIVAGLILASFSPTSALSVSFLGSLFVSALKAVAPILVFVLVASSIANQQKETRTNLKPIIKLYLLGTLFAASTAVMVSYFFPTTLVLVATDIQATPPNGILEVLNTLLFKIVDNPVNALVSGNFIGILAWAAGLGFALQRANQSTKQALHDISNAVTRIVHLVIRFAPLGIFGLVAGTIAETGFDALFGYTHLLAVLLGCMILIALVINPIIVYGKTKKNPYPLIFRCLRESGVTAFFTRSSAANIPVNMALCEKLELHKDTYSVSIPLGATINMAGASITITVLTLAAVHTLGIEFDIATAILLSVVAAVSACGASGVAGGSLLLIPLACGLFGVPNEVAMQVVAIGFIIGVVQDSAETALNSSTDVIFTAAACYAAEELPAADTIETLETLETLETTAKA.

9 consecutive transmembrane segments (helical) span residues 11 to 31 (FLNG…LILA), 43 to 63 (FLGS…VFVL), 91 to 111 (LFAA…LVLV), 141 to 161 (ALVS…GFAL), 182 to 202 (IVHL…AGTI), 216 to 236 (LLAV…PIIV), 290 to 310 (IPLG…VLTL), 316 to 336 (LGIE…AVSA), and 363 to 383 (VAMQ…SAET).

This sequence belongs to the dicarboxylate/amino acid:cation symporter (DAACS) (TC 2.A.23) family.

The protein resides in the cell inner membrane. It catalyses the reaction L-serine(in) + Na(+)(in) = L-serine(out) + Na(+)(out). The enzyme catalyses L-threonine(in) + Na(+)(in) = L-threonine(out) + Na(+)(out). Involved in the import of serine and threonine into the cell, with the concomitant import of sodium (symport system). This is Serine/threonine transporter SstT from Psychromonas ingrahamii (strain DSM 17664 / CCUG 51855 / 37).